A 456-amino-acid chain; its full sequence is tRNA modification GTPase MnmE (456 aa).

The (6S)-5-formyl-5,6,7,8-tetrahydrofolate site is built by Arg-25, Glu-82, and Lys-121. The TrmE-type G domain maps to Gly-217 to Gly-379. Asn-227 serves as a coordination point for K(+). GTP-binding positions include Asn-227 to Ser-232, Thr-246 to Thr-252, and Asp-271 to Gly-274. Position 231 (Ser-231) interacts with Mg(2+). Thr-246, Ile-248, and Thr-251 together coordinate K(+). A Mg(2+)-binding site is contributed by Thr-252. Lys-456 contributes to the (6S)-5-formyl-5,6,7,8-tetrahydrofolate binding site.

Belongs to the TRAFAC class TrmE-Era-EngA-EngB-Septin-like GTPase superfamily. TrmE GTPase family. As to quaternary structure, homodimer. Heterotetramer of two MnmE and two MnmG subunits. The cofactor is K(+).

Its subcellular location is the cytoplasm. Exhibits a very high intrinsic GTPase hydrolysis rate. Involved in the addition of a carboxymethylaminomethyl (cmnm) group at the wobble position (U34) of certain tRNAs, forming tRNA-cmnm(5)s(2)U34. The protein is tRNA modification GTPase MnmE of Saccharophagus degradans (strain 2-40 / ATCC 43961 / DSM 17024).